Here is a 172-residue protein sequence, read N- to C-terminus: Crossover junction endodeoxyribonuclease RuvC (172 aa).

Active-site residues include Asp-7, Glu-68, and Asp-140. Mg(2+) contacts are provided by Asp-7, Glu-68, and Asp-140.

Belongs to the RuvC family. As to quaternary structure, homodimer which binds Holliday junction (HJ) DNA. The HJ becomes 2-fold symmetrical on binding to RuvC with unstacked arms; it has a different conformation from HJ DNA in complex with RuvA. In the full resolvosome a probable DNA-RuvA(4)-RuvB(12)-RuvC(2) complex forms which resolves the HJ. It depends on Mg(2+) as a cofactor.

Its subcellular location is the cytoplasm. It carries out the reaction Endonucleolytic cleavage at a junction such as a reciprocal single-stranded crossover between two homologous DNA duplexes (Holliday junction).. Its function is as follows. The RuvA-RuvB-RuvC complex processes Holliday junction (HJ) DNA during genetic recombination and DNA repair. Endonuclease that resolves HJ intermediates. Cleaves cruciform DNA by making single-stranded nicks across the HJ at symmetrical positions within the homologous arms, yielding a 5'-phosphate and a 3'-hydroxyl group; requires a central core of homology in the junction. The consensus cleavage sequence is 5'-(A/T)TT(C/G)-3'. Cleavage occurs on the 3'-side of the TT dinucleotide at the point of strand exchange. HJ branch migration catalyzed by RuvA-RuvB allows RuvC to scan DNA until it finds its consensus sequence, where it cleaves and resolves the cruciform DNA. This is Crossover junction endodeoxyribonuclease RuvC from Polynucleobacter asymbioticus (strain DSM 18221 / CIP 109841 / QLW-P1DMWA-1) (Polynucleobacter necessarius subsp. asymbioticus).